Reading from the N-terminus, the 257-residue chain is Pyridoxine 5'-phosphate synthase (257 aa).

3-amino-2-oxopropyl phosphate is bound at residue asparagine 6. 8-9 lines the 1-deoxy-D-xylulose 5-phosphate pocket; that stretch reads DH. 3-amino-2-oxopropyl phosphate is bound at residue arginine 17. Histidine 42 serves as the catalytic Proton acceptor. 2 residues coordinate 1-deoxy-D-xylulose 5-phosphate: arginine 44 and histidine 49. Glutamate 69 functions as the Proton acceptor in the catalytic mechanism. Residue threonine 99 coordinates 1-deoxy-D-xylulose 5-phosphate. Histidine 211 serves as the catalytic Proton donor. Residues glycine 212 and 233–234 each bind 3-amino-2-oxopropyl phosphate; that span reads GQ.

The protein belongs to the PNP synthase family. In terms of assembly, homooctamer; tetramer of dimers.

It localises to the cytoplasm. The catalysed reaction is 3-amino-2-oxopropyl phosphate + 1-deoxy-D-xylulose 5-phosphate = pyridoxine 5'-phosphate + phosphate + 2 H2O + H(+). Its pathway is cofactor biosynthesis; pyridoxine 5'-phosphate biosynthesis; pyridoxine 5'-phosphate from D-erythrose 4-phosphate: step 5/5. Catalyzes the complicated ring closure reaction between the two acyclic compounds 1-deoxy-D-xylulose-5-phosphate (DXP) and 3-amino-2-oxopropyl phosphate (1-amino-acetone-3-phosphate or AAP) to form pyridoxine 5'-phosphate (PNP) and inorganic phosphate. The sequence is that of Pyridoxine 5'-phosphate synthase from Campylobacter hominis (strain ATCC BAA-381 / DSM 21671 / CCUG 45161 / LMG 19568 / NCTC 13146 / CH001A).